We begin with the raw amino-acid sequence, 732 residues long: Beta-galactosidase 5 (732 aa).

Positions 1–23 (MGTTILVLSKILTFLLTTMLIGS) are cleaved as a signal peptide. E187 functions as the Proton donor in the catalytic mechanism. E256 acts as the Nucleophile in catalysis. N-linked (GlcNAc...) asparagine glycosylation occurs at N466.

It belongs to the glycosyl hydrolase 35 family. Expressed in leaves and flowers.

The protein localises to the secreted. It localises to the extracellular space. It is found in the apoplast. The catalysed reaction is Hydrolysis of terminal non-reducing beta-D-galactose residues in beta-D-galactosides.. This is Beta-galactosidase 5 (BGAL5) from Arabidopsis thaliana (Mouse-ear cress).